Here is a 65-residue protein sequence, read N- to C-terminus: Large ribosomal subunit protein uL29 (65 aa).

The protein belongs to the universal ribosomal protein uL29 family.

The sequence is that of Large ribosomal subunit protein uL29 from Brevibacillus brevis (strain 47 / JCM 6285 / NBRC 100599).